A 613-amino-acid chain; its full sequence is Myosin light chain kinase 2, skeletal/cardiac muscle (613 aa).

Polar residues predominate over residues 1 to 20; sequence MTTENGAVELGSQSLSTEQT. The disordered stretch occupies residues 1 to 168; the sequence is MTTENGAVEL…RGSPAFLHSP (168 aa). Basic and acidic residues predominate over residues 32 to 55; it reads SEKEPSAPATEKDLSPPNAKKDPG. Pro residues predominate over residues 56 to 66; the sequence is APDPKNNPDPP. The span at 67–83 shows a compositional bias: basic and acidic residues; the sequence is SLKKDPAKAPGPEKKGD. Residues 95–105 are compositionally biased toward gly residues; sequence SGEGDGGGGPA. The segment covering 106–122 has biased composition (low complexity); that stretch reads EGSEGPPAALPLPTATA. Over residues 145–158 the composition is skewed to basic and acidic residues; that stretch reads KAGKKAAECREAGR. Phosphoserine is present on residues serine 161, serine 167, and serine 169. Residues 219 to 240 form a disordered region; it reads EKKKEEAEKASGQAGQAKVQGD. The Protein kinase domain occupies 302-557; that stretch reads MNSKEALGGG…AEQCLAHPWL (256 aa). ATP contacts are provided by residues 308-316 and lysine 331; that span reads LGGGKFGAV. Residue aspartate 423 is the Proton acceptor of the active site. Threonine 462 is subject to Phosphothreonine. Positions 591 to 603 are calmodulin-binding; it reads IAVSAANRFKKIS.

The protein belongs to the protein kinase superfamily. CAMK Ser/Thr protein kinase family. May interact with centrin.

The protein localises to the cytoplasm. It carries out the reaction L-seryl-[myosin light chain] + ATP = O-phospho-L-seryl-[myosin light chain] + ADP + H(+). It catalyses the reaction L-threonyl-[myosin light chain] + ATP = O-phospho-L-threonyl-[myosin light chain] + ADP + H(+). In terms of biological role, implicated in the level of global muscle contraction and cardiac function. Phosphorylates a specific serine in the N-terminus of a myosin light chain. This chain is Myosin light chain kinase 2, skeletal/cardiac muscle (Mylk2), found in Mus musculus (Mouse).